The sequence spans 221 residues: Phosphoribosylformylglycinamidine synthase subunit PurQ (221 aa).

One can recognise a Glutamine amidotransferase type-1 domain in the interval 2–221; sequence NVGVIVFPGS…FAGLLEPVAA (220 aa). Catalysis depends on C86, which acts as the Nucleophile. Active-site residues include H194 and E196.

In terms of assembly, part of the FGAM synthase complex composed of 1 PurL, 1 PurQ and 2 PurS subunits.

The protein localises to the cytoplasm. The catalysed reaction is N(2)-formyl-N(1)-(5-phospho-beta-D-ribosyl)glycinamide + L-glutamine + ATP + H2O = 2-formamido-N(1)-(5-O-phospho-beta-D-ribosyl)acetamidine + L-glutamate + ADP + phosphate + H(+). It catalyses the reaction L-glutamine + H2O = L-glutamate + NH4(+). It participates in purine metabolism; IMP biosynthesis via de novo pathway; 5-amino-1-(5-phospho-D-ribosyl)imidazole from N(2)-formyl-N(1)-(5-phospho-D-ribosyl)glycinamide: step 1/2. Functionally, part of the phosphoribosylformylglycinamidine synthase complex involved in the purines biosynthetic pathway. Catalyzes the ATP-dependent conversion of formylglycinamide ribonucleotide (FGAR) and glutamine to yield formylglycinamidine ribonucleotide (FGAM) and glutamate. The FGAM synthase complex is composed of three subunits. PurQ produces an ammonia molecule by converting glutamine to glutamate. PurL transfers the ammonia molecule to FGAR to form FGAM in an ATP-dependent manner. PurS interacts with PurQ and PurL and is thought to assist in the transfer of the ammonia molecule from PurQ to PurL. The protein is Phosphoribosylformylglycinamidine synthase subunit PurQ of Synechococcus sp. (strain ATCC 27144 / PCC 6301 / SAUG 1402/1) (Anacystis nidulans).